We begin with the raw amino-acid sequence, 572 residues long: Phospholipase B-like protein B (572 aa).

The first 28 residues, 1 to 28 (MNKLKSNFILNIVILFTILIFNINFINC), serve as a signal peptide directing secretion. N-linked (GlcNAc...) asparagine glycosylation is found at Asn73, Asn138, Asn219, Asn427, Asn544, and Asn564.

It belongs to the phospholipase B-like family.

It localises to the secreted. Probable phospholipase. This chain is Phospholipase B-like protein B (plbB), found in Dictyostelium discoideum (Social amoeba).